Reading from the N-terminus, the 798-residue chain is Heterogeneous nuclear ribonucleoprotein U (798 aa).

At Ser-2 the chain carries N-acetylserine. Ser-4 is subject to Phosphoserine. The SAP domain occupies 8–42; that stretch reads VKKLKVSELKEELKKRRLSDKGLKADLMDRLQAAL. Residues Lys-17 and Lys-21 each carry the N6-acetyllysine modification. The disordered stretch occupies residues 41–229; it reads ALDNEAGGRP…VKRPREDHGR (189 aa). Ser-58 bears the Phosphoserine mark. 2 stretches are compositionally biased toward low complexity: residues 71–80 and 103–113; these read AGLEQEAAAG and ENGAAGAADAG. 2 stretches are compositionally biased toward acidic residues: residues 114-128 and 134-147; these read AMEE…ENGD and EGED…EGAG. Residues 153–169 show a composition bias toward low complexity; the sequence is GEQQSQPPAAAQQASQQ. At Lys-179 the chain carries N6-acetyllysine. Ser-180 carries the post-translational modification ADP-ribosylserine. Residues 192-203 are compositionally biased toward low complexity; it reads APPGARQGQQQA. Residues 207–229 are compositionally biased toward basic and acidic residues; that stretch reads GKTEQKAGDKKRGVKRPREDHGR. At Arg-229 the chain carries Citrulline. Position 239 is an N6-acetyllysine; alternate (Lys-239). Lys-239 is covalently cross-linked (Glycyl lysine isopeptide (Lys-Gly) (interchain with G-Cter in SUMO1); alternate). A Glycyl lysine isopeptide (Lys-Gly) (interchain with G-Cter in SUMO2); alternate cross-link involves residue Lys-239. Tyr-240 is modified (phosphotyrosine). Residues Ser-241 and Ser-245 each carry the phosphoserine modification. Positions 242-438 constitute a B30.2/SPRY domain; that stretch reads RAKSPQPPVE…VEFNFGQKEK (197 aa). Thr-260 carries the post-translational modification Phosphothreonine. An N6-acetyllysine modification is found at Lys-326. The ATPase domain stretch occupies residues 462 to 646; the sequence is PKGPEEKKDC…QKLLEQYKEE (185 aa). Lys-469 participates in a covalent cross-link: Glycyl lysine isopeptide (Lys-Gly) (interchain with G-Cter in SUMO2). ATP is bound at residue 478–485; it reads GLPGAGKT. Residues Lys-490 and Lys-498 each carry the N6-acetyllysine; alternate modification. Residues Lys-490 and Lys-498 each participate in a glycyl lysine isopeptide (Lys-Gly) (interchain with G-Cter in SUMO2); alternate cross-link. At Thr-506 the chain carries Phosphothreonine. Lys-510 participates in a covalent cross-link: Glycyl lysine isopeptide (Lys-Gly) (interchain with G-Cter in SUMO2). At Lys-525 the chain carries N6-acetyllysine. Residue Lys-539 is modified to N6-acetyllysine; alternate. A Glycyl lysine isopeptide (Lys-Gly) (interchain with G-Cter in SUMO2); alternate cross-link involves residue Lys-539. A Glycyl lysine isopeptide (Lys-Gly) (interchain with G-Cter in SUMO2) cross-link involves residue Lys-548. Residue Thr-556 is modified to Phosphothreonine. Glycyl lysine isopeptide (Lys-Gly) (interchain with G-Cter in SUMO2) cross-links involve residues Lys-583 and Lys-600. The actin-binding stretch occupies residues 585–600; the sequence is EDYKQRTQKKAEVEGK. Lys-609 carries the N6-acetyllysine; alternate modification. Lys-609 is covalently cross-linked (Glycyl lysine isopeptide (Lys-Gly) (interchain with G-Cter in SUMO2); alternate). The stretch at 624 to 651 forms a coiled coil; sequence DEITYVELQKEEAQKLLEQYKEESKKAL. Glycyl lysine isopeptide (Lys-Gly) (interchain with G-Cter in SUMO2) cross-links involve residues Lys-638 and Lys-644. Over residues 645-657 the composition is skewed to basic and acidic residues; sequence EESKKALPPEKKQ. Residues 645–727 are disordered; sequence EESKKALPPE…GSGGIGYPYP (83 aa). The residue at position 676 (Arg-676) is an Omega-N-methylarginine. Residues 684–702 are compositionally biased toward gly residues; it reads GGFNMRGGNFRGGAPGNRG. The segment at 688–713 is RNA-binding RGG-box; sequence MRGGNFRGGAPGNRGGYNRRGNMPQR. 3 positions are modified to asymmetric dimethylarginine: Arg-689, Arg-694, and Arg-701. Residues Arg-707 and Arg-713 each carry the asymmetric dimethylarginine; alternate modification. Arg-707 and Arg-713 each carry omega-N-methylarginine; alternate. Over residues 713 to 723 the composition is skewed to gly residues; that stretch reads RGGGGGSGGIG. Asymmetric dimethylarginine occurs at positions 728 and 735. Positions 743-772 are disordered; sequence NYNRGGMPNRGNYNQNFRGRGNNRGYKNQS. Residue Lys-787 is modified to N6-acetyllysine; alternate. Lys-787 is covalently cross-linked (Glycyl lysine isopeptide (Lys-Gly) (interchain with G-Cter in SUMO2); alternate).

As to quaternary structure, oligomer (via ATPase domain and RNA-binding RGG-box region); oligomerization occurs upon ATP-binding in a chromatin-associated RNAs (caRNAs)- and transcription-dependent manner and is required for chromatin decompaction. ATP hydrolysis is required to cycle from an oligomeric to monomeric state to compact chromatin. Component of the coding region determinant (CRD)-mediated complex, composed of DHX9, HNRNPU, IGF2BP1, SYNCRIP and YBX1. Identified in the spliceosome C complex. Identified in a IGF2BP1-dependent mRNP granule complex containing untranslated mRNAs. Associates with heterogeneous nuclear ribonucleoprotein (hnRNP) particles. Associates (via middle region) with the C-terminal domain (CTD) RNA polymerase II (Pol II) holoenzyme; this association occurs in a RNA-independent manner. Associates (via middle region) with the core-TFIIH basal transcription factor complex; this association inhibits the CTD phosphorylation of RNA polymerase II holoenzyme by down-regulating TFIIH kinase activity. Associates with the telomerase holoenzyme complex. Associates with spindle microtubules (MTs) in a TPX2-dependent manner. Interacts (via C-terminus) with actin; this interaction is direct and mediates association with the phosphorylated CTD of RNA polymerase II and is disrupted in presence of the long non-coding H19 RNA. Interacts with AURKA. Interacts (via C-terminus) with CBX5; this interaction is, at least in part, RNA-dependent. Interacts with CR2. Interacts with CRY1. Interacts (via C-terminus) with EP300; this interaction enhances DNA-binding to nuclear scaffold/matrix attachment region (S/MAR) elements. Interacts with ERBB4. Interacts with GEMIN5. Interacts with IGF2BP1. Interacts with IGF2BP2 and IGF2BP3. Interacts with NCL; this interaction occurs during mitosis. Interacts (via C-terminus) with NR3C1 (via C-terminus). Interacts with PLK1; this interaction induces phosphorylation of HNRNPU at Ser-58 in mitosis. Interacts with POU3F4. Interacts with SMARCA4; this interaction occurs in embryonic stem cells and stimulates global Pol II-mediated transcription. Interacts (via C-terminus) with TOP2A; this interaction protects the topoisomerase TOP2A from degradation and positively regulates the relaxation of supercoiled DNA by TOP2A in a RNA-dependent manner. Interacts with TPX2; this interaction recruits HNRNPU to spindle microtubules (MTs). Interacts with UBQLN2. Interacts (via RNA-binding RGG-box region) with ZBTB7B; the interaction facilitates the recruitment of long non-coding RNA Blnc1 by ZBTB7B. Interacts with ERCC6. Post-translationally, cleaved at Asp-94 by CASP3 during T-cell apoptosis, resulting in a loss of DNA- and chromatin-binding activities. In terms of processing, extensively phosphorylated. Phosphorylated on Ser-58 by PLK1 and dephosphorylated by protein phosphatase 2A (PP2A) in mitosis. Arg-707 and Arg-713 are dimethylated, probably to asymmetric dimethylarginine. Post-translationally, citrullinated by PADI4.

It localises to the nucleus. Its subcellular location is the nucleus matrix. The protein localises to the chromosome. It is found in the nucleus speckle. The protein resides in the cytoplasm. It localises to the cytoskeleton. Its subcellular location is the microtubule organizing center. The protein localises to the centrosome. It is found in the centromere. The protein resides in the kinetochore. It localises to the spindle. Its subcellular location is the spindle pole. The protein localises to the midbody. It is found in the cell surface. The protein resides in the cytoplasmic granule. DNA- and RNA-binding protein involved in several cellular processes such as nuclear chromatin organization, telomere-length regulation, transcription, mRNA alternative splicing and stability, Xist-mediated transcriptional silencing and mitotic cell progression. Plays a role in the regulation of interphase large-scale gene-rich chromatin organization through chromatin-associated RNAs (caRNAs) in a transcription-dependent manner, and thereby maintains genomic stability. Required for the localization of the long non-coding Xist RNA on the inactive chromosome X (Xi) and the subsequent initiation and maintenance of X-linked transcriptional gene silencing during X-inactivation. Required for the topoisomerase TOP2A protein stability and activity in a RNA-dependent manner. Plays a role as a RNA polymerase II (Pol II) holoenzyme transcription regulator. Promotes transcription initiation by direct association with the core-TFIIH basal transcription factor complex for the assembly of a functional pre-initiation complex with Pol II in a actin-dependent manner. Blocks Pol II transcription elongation activity by inhibiting the C-terminal domain (CTD) phosphorylation of Pol II and dissociates from Pol II pre-initiation complex prior to productive transcription elongation. Positively regulates CBX5-induced transcriptional gene silencing and retention of CBX5 in the nucleus. Negatively regulates glucocorticoid-mediated transcriptional activation. Key regulator of transcription initiation and elongation in embryonic stem cells upon leukemia inhibitory factor (LIF) signaling. Involved in the long non-coding RNA H19-mediated Pol II transcriptional repression. Participates in the circadian regulation of the core clock component BMAL1 transcription. Plays a role in the regulation of telomere length. Plays a role as a global pre-mRNA alternative splicing modulator by regulating U2 small nuclear ribonucleoprotein (snRNP) biogenesis. Plays a role in mRNA stability. Component of the CRD-mediated complex that promotes MYC mRNA stabilization. Enhances the expression of specific genes, such as tumor necrosis factor TNFA, by regulating mRNA stability, possibly through binding to the 3'-untranslated region (UTR). Plays a role in mitotic cell cycle regulation. Involved in the formation of stable mitotic spindle microtubules (MTs) attachment to kinetochore, spindle organization and chromosome congression. Phosphorylation at Ser-58 by PLK1 is required for chromosome alignement and segregation and progression through mitosis. Also contributes to the targeting of AURKA to mitotic spindle MTs. Binds to double- and single-stranded DNA and RNA, poly(A), poly(C) and poly(G) oligoribonucleotides. Binds to chromatin-associated RNAs (caRNAs). Associates with chromatin to scaffold/matrix attachment region (S/MAR) elements in DNA. Associates with chromatin in a chromatin-associated RNAs (caRNAs)-dependent manner. Binds to the Xist RNA. Binds the long non-coding H19 RNA. Binds to SMN1/2 pre-mRNAs at G/U-rich regions. Binds to small nuclear RNAs (snRNAs). Binds to the 3'-UTR of TNFA mRNA. Binds (via RNA-binding RGG-box region) to the long non-coding Xist RNA; this binding is direct and bridges the Xist RNA and the inactive chromosome X (Xi). Also negatively regulates embryonic stem cell differentiation upon LIF signaling. Required for embryonic development. Binds to brown fat long non-coding RNA 1 (Blnc1); facilitates the recruitment of Blnc1 by ZBTB7B required to drive brown and beige fat development and thermogenesis. This Rattus norvegicus (Rat) protein is Heterogeneous nuclear ribonucleoprotein U.